The sequence spans 521 residues: Lipid-translocating exporter-like protein RTA1 (521 aa).

A run of 7 helical transmembrane segments spans residues 186 to 206 (GAPI…SWQC), 211 to 231 (AWKL…GYAL), 249 to 269 (LALF…LELA), 292 to 312 (VTAF…SGVS), 332 to 352 (LVAL…SVLF), 371 to 391 (TLMT…FRLV), and 418 to 438 (EAYF…LWNV). The tract at residues 493 to 521 (THSQPQELYENPNGNGHKKFRLGNGGRAT) is disordered.

This sequence belongs to the lipid-translocating exporter (LTE) (TC 9.A.26.1) family.

It localises to the membrane. Lipid-translocating exporter-like protein; part of the gene cluster that mediates the biosynthesis of phomenoic acid, a long chain aliphatic carboxylic acid that does not appear to be essential for pathogenicity but may play a role in allowing to outcompete other fungi in the environmental niche via its antifungal properties. The sequence is that of Lipid-translocating exporter-like protein RTA1 from Leptosphaeria maculans (strain JN3 / isolate v23.1.3 / race Av1-4-5-6-7-8) (Blackleg fungus).